The chain runs to 775 residues: Mitosis inducer protein kinase cdr2 (775 aa).

The region spanning 10-262 (WELGLSLGSG…MEQIREHPFL (253 aa)) is the Protein kinase domain. Residues 16–24 (LGSGGPNSS) and Lys-39 contribute to the ATP site. Asp-133 (proton acceptor) is an active-site residue. Phosphoserine occurs at positions 309, 311, and 476. Positions 549–563 (NNIDNNNYNQPYANA) are enriched in low complexity. Residues 549 to 620 (NNIDNNNYNQ…TKKKLSGSPF (72 aa)) are disordered. The span at 584-593 (LSQSPASYDS) shows a compositional bias: polar residues. Phosphoserine is present on residues Ser-587 and Ser-632.

This sequence belongs to the protein kinase superfamily. CAMK Ser/Thr protein kinase family. NIM1 subfamily. Interacts with blt1 and mid1. Post-translationally, autophosphorylated.

It carries out the reaction L-seryl-[protein] + ATP = O-phospho-L-seryl-[protein] + ADP + H(+). The enzyme catalyses L-threonyl-[protein] + ATP = O-phospho-L-threonyl-[protein] + ADP + H(+). Acts as a mitotic inducer. In G2 it negatively regulates wee1, a mitotic inhibitor. Also has a role in cytokinesis where it required for proper septum formation. The polypeptide is Mitosis inducer protein kinase cdr2 (cdr2) (Schizosaccharomyces pombe (strain 972 / ATCC 24843) (Fission yeast)).